The primary structure comprises 1408 residues: ABC multidrug transporter MDR1 (1408 aa).

The span at 79 to 88 shows a compositional bias: polar residues; sequence IAASSDTLRN. A disordered region spans residues 79–102; sequence IAASSDTLRNSPLEKPISNAFSKS. Helical transmembrane passes span 147–167 and 223–243; these read FAAPLEIIAMVLGLVLAVAAG and LYLMAIGIGMFLATWLYMFIW. Residues 157–464 enclose the ABC transmembrane type-1 1 domain; it reads VLGLVLAVAA…LAPELAAVTK (308 aa). Asparagine 244 carries N-linked (GlcNAc...) asparagine glycosylation. The next 4 membrane-spanning stretches (helical) occupy residues 296–316, 321–341, 408–428, and 436–456; these read KVALVFQYAGTFVCGFVLAFV, LAGALVSILPVIMLCGGIMMT, IMFFVIYAAYALAFFYGGILV, and GIVINVFMSILIGSFSMAMLA. The ABC transporter 1 domain occupies 499 to 744; the sequence is ISFENVKFHY…ENGPYAQLVN (246 aa). 534 to 541 is a binding site for ATP; that stretch reads GASGSGKS. N-linked (GlcNAc...) asparagine glycosylation occurs at asparagine 606. A run of 2 helical transmembrane segments spans residues 838-858 and 882-902; these read IIAFIAAICAGMVYPSLAILF and LWYFITALAAAFVIFFQSAGF. The ABC transmembrane type-1 2 domain occupies 838–1125; it reads IIAFIAAICA…VFTFVPDASK (288 aa). N-linked (GlcNAc...) asparagine glycosylation is present at asparagine 934. 4 consecutive transmembrane segments (helical) span residues 952 to 972, 981 to 999, 1072 to 1092, and 1099 to 1119; these read GLFGPTLGTVVQSCATLIGGC, LLALIGIACIPILVSGGYI, GLTFCIIALVFYIGALWIIDA, and FYTVLNSIVFASIQAGNVFTF. 2 N-linked (GlcNAc...) asparagine glycosylation sites follow: asparagine 1127 and asparagine 1182. The region spanning 1162-1402 is the ABC transporter 2 domain; the sequence is VRIEGVHFRY…KGGYYELVQM (241 aa). 1197–1204 provides a ligand contact to ATP; that stretch reads GPSGCGKS. A glycan (N-linked (GlcNAc...) asparagine) is linked at asparagine 1404.

This sequence belongs to the ABC transporter superfamily. ABCB family. Multidrug resistance exporter (TC 3.A.1.201) subfamily.

It localises to the cell membrane. It catalyses the reaction itraconazole(in) + ATP + H2O = itraconazole(out) + ADP + phosphate + H(+). It carries out the reaction voriconazole(in) + ATP + H2O = voriconazole(out) + ADP + phosphate + H(+). The catalysed reaction is fluconazole(in) + ATP + H2O = fluconazole(out) + ADP + phosphate + H(+). Pleiotropic ABC efflux transporter that confers resistance to structurally and functionally unrelated compounds including azoles such as fluconazole (FLC), itraconazole (ITC), posaconazole (POS), and voriconazole (VRC). This Cryptococcus neoformans var. grubii serotype A (strain H99 / ATCC 208821 / CBS 10515 / FGSC 9487) (Filobasidiella neoformans var. grubii) protein is ABC multidrug transporter MDR1.